The following is a 131-amino-acid chain: MHELSVALSLIDALTESLGTHPDVRIEVIHLKIGPLSGVIEPALRSAFEIAAVGTIAEGAILAIQVPPIVLRCEECGQETNLSGADVMDNRDGLGSWISWLPPACPACGAAALTVVGGRELELVAAEVRRG.

His-2 is a Ni(2+) binding site. Zn(2+)-binding residues include Cys-73, Cys-76, Cys-105, and Cys-108.

This sequence belongs to the HypA/HybF family.

Involved in the maturation of [NiFe] hydrogenases. Required for nickel insertion into the metal center of the hydrogenase. The chain is Hydrogenase maturation factor HypA from Thermomicrobium roseum (strain ATCC 27502 / DSM 5159 / P-2).